The chain runs to 467 residues: Light-independent protochlorophyllide reductase subunit N (467 aa).

[4Fe-4S] cluster-binding residues include C23, C48, and C108.

This sequence belongs to the BchN/ChlN family. Protochlorophyllide reductase is composed of three subunits; ChlL, ChlN and ChlB. Forms a heterotetramer of two ChlB and two ChlN subunits. [4Fe-4S] cluster serves as cofactor.

It carries out the reaction chlorophyllide a + oxidized 2[4Fe-4S]-[ferredoxin] + 2 ADP + 2 phosphate = protochlorophyllide a + reduced 2[4Fe-4S]-[ferredoxin] + 2 ATP + 2 H2O. Its pathway is porphyrin-containing compound metabolism; chlorophyll biosynthesis (light-independent). Its function is as follows. Component of the dark-operative protochlorophyllide reductase (DPOR) that uses Mg-ATP and reduced ferredoxin to reduce ring D of protochlorophyllide (Pchlide) to form chlorophyllide a (Chlide). This reaction is light-independent. The NB-protein (ChlN-ChlB) is the catalytic component of the complex. The polypeptide is Light-independent protochlorophyllide reductase subunit N (Nostoc sp. (strain PCC 7120 / SAG 25.82 / UTEX 2576)).